A 44-amino-acid polypeptide reads, in one-letter code: Protein PsbN (44 aa).

A helical transmembrane segment spans residues 6 to 26; the sequence is FFFTIFVWFLLISVTGYSIYV.

The protein belongs to the PsbN family.

Its subcellular location is the plastid. It is found in the chloroplast thylakoid membrane. May play a role in photosystem I and II biogenesis. This Bigelowiella natans (Pedinomonas minutissima) protein is Protein PsbN.